The primary structure comprises 262 residues: Co-chaperone protein DjlA (262 aa).

At 1-6 (MRFWGK) the chain is on the periplasmic side. A helical membrane pass occupies residues 7–30 (FFGFVIGFMFGRFFGALLGLWLGH). Over 31–262 (LYDKRPGGGA…DRVKSERGMR (232 aa)) the chain is Cytoplasmic. Residues 196–262 (DAYHLLGITA…DRVKSERGMR (67 aa)) enclose the J domain.

Homodimer.

Its subcellular location is the cell inner membrane. Its function is as follows. Regulatory DnaK co-chaperone. Direct interaction between DnaK and DjlA is needed for the induction of the wcaABCDE operon, involved in the synthesis of a colanic acid polysaccharide capsule, possibly through activation of the RcsB/RcsC phosphotransfer signaling pathway. The colanic acid capsule may help the bacterium survive conditions outside the host. The polypeptide is Co-chaperone protein DjlA (Shewanella oneidensis (strain ATCC 700550 / JCM 31522 / CIP 106686 / LMG 19005 / NCIMB 14063 / MR-1)).